A 232-amino-acid chain; its full sequence is Clarin-1 (232 aa).

The chain crosses the membrane as a helical span at residues 8–28 (IIFCMAGVFSFACALGVVTAL). A glycan (N-linked (GlcNAc...) asparagine) is linked at Asn48. A run of 2 helical transmembrane segments spans residues 101 to 121 (IILFSMILVVLTMVGTAFFMY) and 135 to 155 (LGLYLVSFISGSCGCLVMILF). An N-linked (GlcNAc...) asparagine glycan is attached at Asn184. A helical membrane pass occupies residues 186–206 (TTSFWVVFICFFVHFLNGLLI).

This sequence belongs to the clarin family.

Its subcellular location is the cell membrane. In terms of biological role, may have a role in the excitatory ribbon synapse junctions between hair cells and cochlear ganglion cells and presumably also in analogous synapses within the retina. In Rattus norvegicus (Rat), this protein is Clarin-1 (Clrn1).